The sequence spans 700 residues: Autophagy-related protein 13 (700 aa).

The tract at residues 319–352 (GSINSSSSPPPGATQSNQSVSSFSTSKPIPVTLN) is disordered. Over residues 332–344 (TQSNQSVSSFSTS) the composition is skewed to low complexity. The tract at residues 399–407 (SSFGSRFRT) is ATG17-binding. The interval 428-487 (TPNNPILHNFRSRNKSPSVSSTELGPSSSIYMDDDLDSFMKMLDSKPDLRFPSNSPSVYE) is ATG1-binding. Polar residues predominate over residues 506-532 (EQQQHGSPSSNQIMIHSQSQTSQSQVF). Disordered stretches follow at residues 506 to 562 (EQQQ…PGVS), 576 to 637 (HASS…NPEL), and 649 to 700 (ESDD…NQEF). The segment covering 595–631 (SSPPASATAVATVHNSLRRLTSSSQRTNTNSTNSSTR) has biased composition (low complexity). Over residues 656–667 (DEHSPRSTDTKS) the composition is skewed to basic and acidic residues.

The protein belongs to the ATG13 family. Fungi subfamily. Hypophosphorylated form interacts with ATG1 to form the ATG1-ATG13 kinase complex. The ATG1-ATG13 complex interacts with the ATG17-ATG29-ATG31 complex through direct interaction with ATG17. Interacts with VAC8.

It is found in the cytoplasm. Its subcellular location is the preautophagosomal structure. Functionally, activates the ATG1 kinase in a nutritional condition dependent manner through the TOR pathway, leading to autophagy. Involved in ATG9 and ATG23 cycling through the pre-autophagosomal structure. Also involved in cytoplasm to vacuole transport (Cvt) and more specifically in Cvt vesicle formation. Seems to play a role in the switching machinery regulating the conversion between the Cvt pathway and autophagy. Finally, ATG13 is also required for glycogen storage during stationary phase. Its function is as follows. Acts as a negative regulator of xylose alcoholic fermentation, a role that is not related to autophagy. This is Autophagy-related protein 13 from Ogataea parapolymorpha (strain ATCC 26012 / BCRC 20466 / JCM 22074 / NRRL Y-7560 / DL-1) (Yeast).